A 360-amino-acid polypeptide reads, in one-letter code: mRNA cap guanine-N(7) methyltransferase (360 aa).

Residues 1 to 62 (MSSSNSRVHE…NRHENNGNAQ (62 aa)) form a disordered region. Residues 7 to 19 (RVHEEQPPTENRR) show a composition bias toward basic and acidic residues. The mRNA cap 0 methyltransferase domain occupies 83–358 (SPIIQLKRFN…FYLAFAFEKR (276 aa)). 92–93 (NN) provides a ligand contact to mRNA. 6 residues coordinate S-adenosyl-L-methionine: lysine 96, glycine 118, aspartate 140, aspartate 168, glutamine 191, and tyrosine 196.

It belongs to the class I-like SAM-binding methyltransferase superfamily. mRNA cap 0 methyltransferase family. As to quaternary structure, interacts with cdk9.

It is found in the nucleus. It catalyses the reaction a 5'-end (5'-triphosphoguanosine)-ribonucleoside in mRNA + S-adenosyl-L-methionine = a 5'-end (N(7)-methyl 5'-triphosphoguanosine)-ribonucleoside in mRNA + S-adenosyl-L-homocysteine. Its function is as follows. Responsible for methylating the 5'-cap structure of mRNAs. This chain is mRNA cap guanine-N(7) methyltransferase (pcm1), found in Schizosaccharomyces pombe (strain 972 / ATCC 24843) (Fission yeast).